We begin with the raw amino-acid sequence, 258 residues long: MKQSPKIGILLMEGTNNETEVYYSVKRSGGSPDFIHINDLSAGRKRVSDYDGLIIPGGFSAGDYIRAGVIFAARLGAVAGKEIREFVDDGKPLIGICNGFQVLMEMGLIYDRSKITLTNNESNRFECRYTYMKMTSRNRIFQSGFYGKGVFQVPVAHAEGRIAVSERSVLKKLYENDQVVFKYSNENDVTDEYPWNPNGSIDSVASLSNEAGNVIGLMPHPERIYYRYQAMYLETEKDEVAGKIFYDSLVNYARDRNG.

Residues 7 to 238 (IGILLMEGTN…QAMYLETEKD (232 aa)) enclose the Glutamine amidotransferase type-1 domain. Cysteine 97 (nucleophile) is an active-site residue. Active-site residues include histidine 220 and glutamate 222.

As to quaternary structure, part of the FGAM synthase complex composed of 1 PurL, 1 PurQ and 2 PurS subunits.

Its subcellular location is the cytoplasm. It carries out the reaction N(2)-formyl-N(1)-(5-phospho-beta-D-ribosyl)glycinamide + L-glutamine + ATP + H2O = 2-formamido-N(1)-(5-O-phospho-beta-D-ribosyl)acetamidine + L-glutamate + ADP + phosphate + H(+). The catalysed reaction is L-glutamine + H2O = L-glutamate + NH4(+). It functions in the pathway purine metabolism; IMP biosynthesis via de novo pathway; 5-amino-1-(5-phospho-D-ribosyl)imidazole from N(2)-formyl-N(1)-(5-phospho-D-ribosyl)glycinamide: step 1/2. Functionally, part of the phosphoribosylformylglycinamidine synthase complex involved in the purines biosynthetic pathway. Catalyzes the ATP-dependent conversion of formylglycinamide ribonucleotide (FGAR) and glutamine to yield formylglycinamidine ribonucleotide (FGAM) and glutamate. The FGAM synthase complex is composed of three subunits. PurQ produces an ammonia molecule by converting glutamine to glutamate. PurL transfers the ammonia molecule to FGAR to form FGAM in an ATP-dependent manner. PurS interacts with PurQ and PurL and is thought to assist in the transfer of the ammonia molecule from PurQ to PurL. This chain is Phosphoribosylformylglycinamidine synthase subunit PurQ, found in Thermoplasma volcanium (strain ATCC 51530 / DSM 4299 / JCM 9571 / NBRC 15438 / GSS1).